We begin with the raw amino-acid sequence, 345 residues long: Ferrochelatase (345 aa).

2 residues coordinate Fe cation: His192 and Glu295.

It belongs to the ferrochelatase family.

It localises to the cytoplasm. It carries out the reaction heme b + 2 H(+) = protoporphyrin IX + Fe(2+). Its pathway is porphyrin-containing compound metabolism; protoheme biosynthesis; protoheme from protoporphyrin-IX: step 1/1. Functionally, catalyzes the ferrous insertion into protoporphyrin IX. In Opitutus terrae (strain DSM 11246 / JCM 15787 / PB90-1), this protein is Ferrochelatase.